The following is a 274-amino-acid chain: Orotidine 5'-phosphate decarboxylase (274 aa).

Residues D40, 62-64, 93-102, Y227, and R245 each bind substrate; these read KTH and DRKFVDIGNT. Residue K95 is the Proton donor of the active site.

The protein belongs to the OMP decarboxylase family.

The enzyme catalyses orotidine 5'-phosphate + H(+) = UMP + CO2. It functions in the pathway pyrimidine metabolism; UMP biosynthesis via de novo pathway; UMP from orotate: step 2/2. The polypeptide is Orotidine 5'-phosphate decarboxylase (URA3) (Coccidioides posadasii (strain RMSCC 757 / Silveira) (Valley fever fungus)).